The sequence spans 207 residues: MAKHEKISEAVVRRLPIYLRYLSYLQQVEVTTVSSQQMGKNLDVNPAQIRKDLAAFGDFGKKGIGYDVDYLVEKIREILKLTDEIRVALVGAGHLGHAISNYNAYLKDNMRIAAIFDNNPEKQGKKVAGIPIQPLSELEETIVNKQIKLAIITVPAPAAQSVCDQLTQAGIKGILNFAPTTIRAGKDVRIHYADVTSNLQSLAYYLT.

A DNA-binding region (H-T-H motif) is located at residues 17 to 56 (IYLRYLSYLQQVEVTTVSSQQMGKNLDVNPAQIRKDLAAF). 91-96 (GAGHLG) provides a ligand contact to NAD(+).

This sequence belongs to the transcriptional regulatory Rex family. In terms of assembly, homodimer.

Its subcellular location is the cytoplasm. Functionally, modulates transcription in response to changes in cellular NADH/NAD(+) redox state. This Brevibacillus brevis (strain 47 / JCM 6285 / NBRC 100599) protein is Redox-sensing transcriptional repressor Rex.